We begin with the raw amino-acid sequence, 640 residues long: Cytochrome P450 monooxygenase cyp1 (640 aa).

An N-linked (GlcNAc...) asparagine glycan is attached at Asn-71. The chain crosses the membrane as a helical span at residues 120–139 (LLVFLVGLFLGTIYLLYRYW). The N-linked (GlcNAc...) asparagine glycan is linked to Asn-350. Heme is bound at residue Cys-572.

The protein belongs to the cytochrome P450 family. Heme is required as a cofactor.

The protein localises to the membrane. The protein operates within secondary metabolite biosynthesis. Cytochrome P450 monooxygenase; part of the gene cluster that mediates the biosynthesis of the glycolipid biosurfactant ustilagic acid (UA). UA is a secreted cellobiose glycolipid that is toxic for many microorganisms and confers biocontrol activity to U.maydis. UA consists of 15,16-dihydroxypalmitic or 2,15,16-trihydroxypalmitic acid, which is O-glycosidically linked to cellobiose at its terminal hydroxyl group. In addition, the cellobiose moiety is acetylated and acylated with a short-chain hydroxy fatty acid. UA biosynthesis starts with omega-hydroxylation of palmitic acid catalyzed by the cytochrome P450 monooxygenase cyp1. Terminal hydroxylation of palmitic acid precedes subterminal hydroxylation catalyzed by the cytochrome P450 monooxygenase cyp2. Sequential glucosylation of the hydroxy fatty acid is probably catalyzed by the glycosyltransferase ugt1. The cellobiose lipid is further decorated by acetylation of the proximal glucose residue and by acylation with a short-chain beta-hydroxy fatty acid at the distal glucose residue. The acyltransferase uat1 may be a good candidate for catalyzing either acetylation or acylation of the cellobiose lipid. The fatty acid synthase fas2 may be involved in synthesis of the carbon backbone of the short-chain beta-hydroxy fatty acid esterified to the cellobiose disaccharide. The secreted UA consists of a mixture of both alpha-hydroxylated and non-hydroxylated glycolipids; therefore, alpha-hydroxylation of the long-chain fatty, catalyzed by the fatty acid hydroxylase ahd1, occurs late in UA biosynthesis and may be the last step before secretion. The sequence is that of Cytochrome P450 monooxygenase cyp1 from Mycosarcoma maydis (Corn smut fungus).